Here is a 92-residue protein sequence, read N- to C-terminus: Small ribosomal subunit protein uS19c (92 aa).

Belongs to the universal ribosomal protein uS19 family.

The protein localises to the plastid. Its subcellular location is the chloroplast. In terms of biological role, protein S19 forms a complex with S13 that binds strongly to the 16S ribosomal RNA. The polypeptide is Small ribosomal subunit protein uS19c (Psilotum nudum (Whisk fern)).